The following is a 1009-amino-acid chain: Glutamate receptor ionotropic, delta-1 (1009 aa).

A signal peptide spans 1–20 (MEALTLWLLPWICQCVSVRA). An interaction with CBLN1 region spans residues 21-436 (DSIIHIGAIF…ERPMGSRLQG (416 aa)). Residues 21–562 (DSIIHIGAIF…SIFSLFAPFD (542 aa)) lie on the Extracellular side of the membrane. Cystine bridges form between C80/C351, C96/C128, and C294/C306. Residues N131 and N200 are each glycosylated (N-linked (GlcNAc...) asparagine). N-linked (GlcNAc...) asparagine glycans are attached at residues N422 and N498. Residues E527, V530, and D531 each contribute to the Ca(2+) site. A helical transmembrane segment spans residues 563 to 583 (FAVWACIAAAIPVVGVLIFVL). The Cytoplasmic segment spans residues 584–637 (NRIQAVRAQSAAQPRPSASATLHSAIWIVYGAFVQQGGESSVNSMAMRIVMGSW). A helical transmembrane segment spans residues 638 to 658 (WLFTLIVCSSYTANLAAFLTV). Over 659 to 830 (SRMDNPIRTF…ADGKSLKLHS (172 aa)) the chain is Extracellular. Residues D753, D755, and S757 each coordinate Ca(2+). Residues 831–851 (FAGVFCILAIGLLLACLVAAL) traverse the membrane as a helical segment. Residues 852 to 1009 (ELWWNSNRCH…ALDTSHGTSI (158 aa)) lie on the Cytoplasmic side of the membrane. A compositionally biased stretch (polar residues) spans 930 to 942 (FLPEQSSHGTSRT). The tract at residues 930–954 (FLPEQSSHGTSRTLSSGPSSNLPLP) is disordered. Positions 943-954 (LSSGPSSNLPLP) are enriched in low complexity.

This sequence belongs to the glutamate-gated ion channel (TC 1.A.10.1) family. GRID1 subfamily. Homodimer. Interacts (via extracellular N-terminal domain) with CBLN1 (via C1q domain), and more weakly with CBLN2; the interactions mediate the trans-synaptic adhesion complexes also with neurexins and are required for ligand-gated cation channel activity.

It is found in the postsynaptic cell membrane. It carries out the reaction Ca(2+)(in) = Ca(2+)(out). The catalysed reaction is Na(+)(in) = Na(+)(out). Its function is as follows. Member of the ionotropic glutamate receptor family, which plays a crucial role in synaptic organization and signal transduction in the central nervous system. Although it shares structural features with ionotropic glutamate receptors, does not bind glutamate as a primary ligand. Instead, forms trans-synaptic adhesion complexes with presynaptic neurexins and cerebellins, regulating NMDA and AMPA receptor activity and influencing synaptic plasticity through signal transduction. In the presence of neurexins and cerebellins, forms cation-selective channels that are proposed to be gated by glycine and D-serine. However, recent research disputes this ligand-gated cation channel activity. Cation-selective ion channel can be triggered by GRM1 in dopaminergic neurons. Also acts as a receptor for GABA, modulating inhibitory synaptic plasticity through non-ionotropic mechanisms. This Homo sapiens (Human) protein is Glutamate receptor ionotropic, delta-1.